The primary structure comprises 239 residues: Major centromere autoantigen B (239 aa).

The interval 28–185 (AGFGGGPNAT…DDEVPVPSFG (158 aa)) is disordered. 2 positions are modified to phosphothreonine: T37 and T39. 2 stretches are compositionally biased toward acidic residues: residues 46–117 (GEEE…EAED) and 148–179 (GEED…DDEV). Residues 176–239 (DDEVPVPSFG…AGARGLGHQS (64 aa)) form a homodimerization region.

As to quaternary structure, antiparallel homodimer. Interacts with CENPT. Identified in a centromere complex containing histones H2A, H2B and H4, and at least CENPA, CENPB, CENPC, CENPT, CENPN, HJURP, SUPT16H, SSRP1 and RSF1. Poly-ADP-ribosylated by PARP1. In terms of processing, N-terminally methylated by METTL11A/NTM1. Alpha-N-methylation is stimulated in response extracellular stimuli, including increased cell density and heat shock, and seems to facilitate binding to CENP-B boxes. Chromatin-bound CENP-B is primarily trimethylated.

It localises to the nucleus. It is found in the chromosome. The protein localises to the centromere. Functionally, interacts with centromeric heterochromatin in chromosomes and binds to a specific 17 bp subset of alphoid satellite DNA, called the CENP-B box. May organize arrays of centromere satellite DNA into a higher-order structure which then directs centromere formation and kinetochore assembly in mammalian chromosomes. The chain is Major centromere autoantigen B (CENPB) from Ovis aries (Sheep).